Here is an 89-residue protein sequence, read N- to C-terminus: Putative regulatory protein Nther_1328 (89 aa).

Belongs to the RemA family.

The sequence is that of Putative regulatory protein Nther_1328 from Natranaerobius thermophilus (strain ATCC BAA-1301 / DSM 18059 / JW/NM-WN-LF).